We begin with the raw amino-acid sequence, 64 residues long: Alpha-conotoxin CnIA (64 aa).

The signal sequence occupies residues Met1 to Ser21. The propeptide occupies Phe22–Arg47. 2 cysteine pairs are disulfide-bonded: Cys51–Cys56 and Cys52–Cys62. Pro54 carries the post-translational modification 4-hydroxyproline; in CnIK; partial. Cys62 is subject to Cysteine amide.

It belongs to the conotoxin A superfamily. Expressed by the venom duct.

It is found in the secreted. In terms of biological role, alpha-conotoxins act on postsynaptic membranes, they bind to the nicotinic acetylcholine receptors (nAChR) and thus inhibit them. CnIA and CnIB block muscular nAChR alpha-1/gamma and alpha-1/delta subunits. The chain is Alpha-conotoxin CnIA from Conus consors (Singed cone).